Here is a 409-residue protein sequence, read N- to C-terminus: Homoserine O-succinyltransferase (409 aa).

The 338-residue stretch at 43–380 (NAIVVCHALN…PHGHDAFLLD (338 aa)) folds into the AB hydrolase-1 domain. Ser-149 functions as the Nucleophile in the catalytic mechanism. Arg-219 is a binding site for substrate. Positions 244–268 (TLPAARGSLPPEGTDPTRGGPASDR) are disordered. Active-site residues include Asp-341 and His-374. Asp-375 provides a ligand contact to substrate.

This sequence belongs to the AB hydrolase superfamily. MetX family. As to quaternary structure, homodimer.

It localises to the cytoplasm. It carries out the reaction L-homoserine + succinyl-CoA = O-succinyl-L-homoserine + CoA. It participates in amino-acid biosynthesis; L-methionine biosynthesis via de novo pathway; O-succinyl-L-homoserine from L-homoserine: step 1/1. Functionally, transfers a succinyl group from succinyl-CoA to L-homoserine, forming succinyl-L-homoserine. This chain is Homoserine O-succinyltransferase, found in Comamonas testosteroni (strain DSM 14576 / KF-1) (Pseudomonas testosteroni).